A 1832-amino-acid polypeptide reads, in one-letter code: MAQPEGVLAWNPAFRPEDNDSVATDLARLALDSGKEVSETTDVDTHVSPPAEEFTDENGSIESKTAISADTSDQGAPDLVDSNTPAADNGSKPDTEEPDKPSRDESIFMQTDKSRAVEDVTENVPTENGNVDITSGLEEHVAEEPHYEGPEKSTGLAGRNDAQDLFEGNDTAWMDEAEGEVNGATVNGEASGTRPGFWDSLGDNERDNEDDFFNQLKTQTKPIYSPPETEARFEEGIPLLGQGAAPQNNHAHKGESQVDDVFGDDEDDESGFFSEIQKRTSAEGPPPITRKSTSQVIDSINAVSDSMFSKQLPAAAELNNSLAVPTADGEIKNSPSEEDLAARWQAELSDDADETMPTEDDLAARWQAELDDDDDDLLLDDDTTNAQRPPEAANIDHMNDTSMLQSPFGTPENLARPKVQPVSYTPHQPSTSDLLSGIPAQNTAAQPTNASMSSYFSAQAPPNPVTTRAESFAERSKEGYKSPYDIPEDLARPRRAVANSRTVVAQPGTVPKPPPRSSSIPAPPLKASTVSPAPLGTSSTAPTAPQKNFFEELPLPPPRPKSRPASSGRYTPNAPVSAPSLPQSIPPPANQYSNVPGAPQSNIGPPDPPQLQQPERLDPYSNLLAPNVPSAPAVPSTASRYSPRPPGVQAGVKPPPSPRYSPAPPQSTNAVAAAPRNRYASQPASISGQGAALQFQPRTSSPLAYHEKIHYEDQGQSEERPQLQSTASPPPLNHSHPSEQPVSSENKGPSGVDVLENVPPLSTRPQSPPKNPYAPSAYTNEFANRVAPVSTGPPIAGMTGVLNSSTEESPFVPPRRSQTQSPSQTLSPRLSVPSLDPFQRPASVHGSTSPTRTVNPYAPAPVPTHNRAPSQVLEFIPPTDGQQLDSLERWKGAPIFKFGFGGAVISCFPKHIPRYSAGQAAPMIKSCPGEVRISQLNDWLPAAEGIVQHPGPLKGKSKKKDLVAWLSSKIAAFENADIPDFDRLSPDASKLREEKTLLWKVIRVLVENDGVLEGSVEAQKSLRNLLFPNLQDSGPNQSLGDVFTPSATLQPLNAPSQPDAVDSRSVDLLRDTLVLGEREKAVWAAVDKRLWGHAMIIASRMDRSVWQQVVQEFVRREVRSATSRTESLAAFYEILAGNIEESIDELVPPSARAGLQMISKVDGHGPAKNSLDGLDSWRETVGLVLSNRSPDDQRALVALGRLLLSYNRTEAAHICFILSRVAVFGGLDDPQANIVLLGVDHQRLSSCAALYNDDSILLTEAYEFATSVLAGSSVSTLPHLLAFKLIHAWSLAERGRKSEAQQYCDAIAAALKATTKPSGYHNQHLFFGVDELSARLRETTSDGGSSWISRPSMEKVSGSMWAKFNSFVAGDDSDAASTGSVKAEEIGPFARVSGTPTISRSPSVSDIYGSYPVAAAQPLPATGPSRYQPVSQYAPSASPEQLRGRSSMDSQRSASFGYPLGQRRGSQEPSTPVDTNMFHGMPMYGSPPVAGYQSTPPQSSYMPLAPVAEDSASGAQQESFSAHSQVSDNAPSHRSSTYAPEPFGHPFDTQAVSTTSQPDQGGYMPPTSSGAYEPPSFESNTESADGAQDESTEEDKPKKKSIMDEDDDEDLAARAAAIQKAERARRDREADEAFRKAAEADAKKPPPATGKKGWFSGWFGGKKDDNSGGGPIRAKLGEENSFYYDTELKKWVNKKDPGSAAPTRGTPPPPKGSAPPSRSMSGSGGPPPAMATPPPTGASGSRPSSSAGAPTSVSASPAPPSLGAPPPAIPRSVSTGAVLPTPPSSSAGAPPRPATSLSNASSIDDLLGAPQARKGPAARGKKKGRYVDVMAK.

7 disordered regions span residues 1–163, 183–209, 240–269, 345–863, 1420–1482, 1509–1679, and 1692–1832; these read MAQP…NDAQ, GATV…RDNE, LGQG…EDDE, QAEL…APVP, PATG…HGMP, EDSA…LGEE, and VNKK…VMAK. Residues 57 to 74 are compositionally biased toward polar residues; it reads ENGSIESKTAISADTSDQ. A compositionally biased stretch (basic and acidic residues) spans 91 to 118; the sequence is SKPDTEEPDKPSRDESIFMQTDKSRAVE. Residues 123-133 show a composition bias toward polar residues; it reads NVPTENGNVDI. A compositionally biased stretch (basic and acidic residues) spans 137–151; it reads LEEHVAEEPHYEGPE. Acidic residues-rich tracts occupy residues 257–269, 348–361, and 369–383; these read QVDD…EDDE, LSDD…TEDD, and ELDD…DDDT. Residues 422 to 457 are compositionally biased toward polar residues; it reads VSYTPHQPSTSDLLSGIPAQNTAAQPTNASMSSYFS. The span at 471 to 480 shows a compositional bias: basic and acidic residues; sequence SFAERSKEGY. Pro residues predominate over residues 510-524; the sequence is VPKPPPRSSSIPAPP. Composition is skewed to polar residues over residues 528–546 and 590–603; these read STVS…TAPQ and NQYS…QSNI. Positions 622–636 are enriched in low complexity; the sequence is NLLAPNVPSAPAVPS. A compositionally biased stretch (pro residues) spans 653–665; that stretch reads KPPPSPRYSPAPP. The span at 679-688 shows a compositional bias: polar residues; that stretch reads YASQPASISG. Basic and acidic residues predominate over residues 705 to 721; the sequence is YHEKIHYEDQGQSEERP. Over residues 738-747 the composition is skewed to polar residues; it reads SEQPVSSENK. Residues 814–829 show a composition bias toward low complexity; the sequence is PRRSQTQSPSQTLSPR. Polar residues-rich tracts occupy residues 845-854, 1428-1439, 1513-1538, and 1550-1559; these read HGSTSPTRTV, QPVSQYAPSASP, SGAQ…SSTY, and QAVSTTSQPD. Basic and acidic residues-rich tracts occupy residues 1594–1603 and 1620–1644; these read EDKPKKKSIM and KAER…DAKK. The span at 1725–1736 shows a compositional bias: pro residues; it reads GPPPAMATPPPT. The span at 1737–1756 shows a compositional bias: low complexity; that stretch reads GASGSRPSSSAGAPTSVSAS. Positions 1757 to 1769 are enriched in pro residues; that stretch reads PAPPSLGAPPPAI.

Belongs to the SEC16 family.

The protein localises to the endoplasmic reticulum membrane. Its function is as follows. Involved in the initiation of assembly of the COPII coat required for the formation of transport vesicles from the endoplasmic reticulum (ER) and the selection of cargo molecules. Also involved in autophagy. In Aspergillus fumigatus (strain ATCC MYA-4609 / CBS 101355 / FGSC A1100 / Af293) (Neosartorya fumigata), this protein is COPII coat assembly protein sec16 (sec16).